The primary structure comprises 57 residues: Large ribosomal subunit protein bL32 (57 aa).

Residues 1–19 (MAVPKRRMSRSNTRSRRSQ) show a composition bias toward basic residues. The segment at 1-21 (MAVPKRRMSRSNTRSRRSQWK) is disordered.

The protein belongs to the bacterial ribosomal protein bL32 family.

The protein is Large ribosomal subunit protein bL32 of Mycobacteroides abscessus (strain ATCC 19977 / DSM 44196 / CCUG 20993 / CIP 104536 / JCM 13569 / NCTC 13031 / TMC 1543 / L948) (Mycobacterium abscessus).